Reading from the N-terminus, the 75-residue chain is Translation initiation factor IF-1 (75 aa).

In terms of domain architecture, S1-like spans 1–72; that stretch reads MSKQDLIEME…TKGRITYRLK (72 aa).

It belongs to the IF-1 family. In terms of assembly, component of the 30S ribosomal translation pre-initiation complex which assembles on the 30S ribosome in the order IF-2 and IF-3, IF-1 and N-formylmethionyl-tRNA(fMet); mRNA recruitment can occur at any time during PIC assembly.

It is found in the cytoplasm. Functionally, one of the essential components for the initiation of protein synthesis. Stabilizes the binding of IF-2 and IF-3 on the 30S subunit to which N-formylmethionyl-tRNA(fMet) subsequently binds. Helps modulate mRNA selection, yielding the 30S pre-initiation complex (PIC). Upon addition of the 50S ribosomal subunit IF-1, IF-2 and IF-3 are released leaving the mature 70S translation initiation complex. This chain is Translation initiation factor IF-1, found in Synechocystis sp. (strain ATCC 27184 / PCC 6803 / Kazusa).